The primary structure comprises 1349 residues: Nitric oxide synthase (1349 aa).

Residues 23–195 (AQQQQQQQQQ…QPRKMSQDYR (173 aa)) form a disordered region. Composition is skewed to low complexity over residues 24-51 (QQQQQQQQQQLQQQQQQLQQQKAQTQQQ) and 64-73 (LNGNGLLSGN). Positions 142–159 (SGSGSGSGGGGVGVGQGA) are enriched in gly residues. Residues 165 to 189 (GSCTASGKSSRELSPSPKNQQQPRK) show a composition bias toward polar residues. S250 provides a ligand contact to (6R)-L-erythro-5,6,7,8-tetrahydrobiopterin. C328 lines the heme b pocket. Q391, W500, Y501, E505, and N510 together coordinate L-arginine. Residues W591 and F604 each coordinate (6R)-L-erythro-5,6,7,8-tetrahydrobiopterin. Y619 serves as a coordination point for heme b. A calmodulin-binding region spans residues 641 to 661 (PRRKFNFKQIARAVKFTSKLF). One can recognise a Flavodoxin-like domain in the interval 671-868 (ATVLYATETG…SFRKWAPEVF (198 aa)). 814–845 (VFALGSSAYPNFCAFGQYVDNILGELGGERLL) is an FMN binding site. The 240-residue stretch at 928 to 1167 (AKAKPHNLTR…VRSALGFHLP (240 aa)) folds into the FAD-binding FR-type domain. Residues 957–968 (YEPGDHVGIFPA) and 1100–1110 (LQPRFYSISSS) each bind FAD. NADP(+) is bound by residues 1175–1193 (ILIGPGTGIAPFRSFWQEF) and 1273–1287 (GHIYVCGDVTMAEHV).

It belongs to the NOS family. It depends on heme b as a cofactor. FAD serves as cofactor. Requires FMN as cofactor.

The enzyme catalyses 2 L-arginine + 3 NADPH + 4 O2 + H(+) = 2 L-citrulline + 2 nitric oxide + 3 NADP(+) + 4 H2O. Stimulated by calcium/calmodulin. In terms of biological role, catalyzes the conversion of L-arginine to L-citrulline producing nitric oxide (NO) which is a messenger molecule with diverse functions throughout the body. Truncated isoforms (isoform 3-isoform 6) are able to form intracellular complexes with the full-length protein and serve as dominant negative inhibitors of the enzyme activity. This is Nitric oxide synthase (Nos) from Drosophila melanogaster (Fruit fly).